The primary structure comprises 455 residues: Serine--tRNA ligase (455 aa).

252-254 (TAE) is an L-serine binding site. Residues 283-285 (RKE) and Val-299 contribute to the ATP site. Glu-306 contacts L-serine. Residue 370–373 (EVVS) coordinates ATP. Position 406 (Thr-406) interacts with L-serine.

This sequence belongs to the class-II aminoacyl-tRNA synthetase family. Type-1 seryl-tRNA synthetase subfamily. As to quaternary structure, homodimer. The tRNA molecule binds across the dimer.

The protein localises to the cytoplasm. It catalyses the reaction tRNA(Ser) + L-serine + ATP = L-seryl-tRNA(Ser) + AMP + diphosphate + H(+). The catalysed reaction is tRNA(Sec) + L-serine + ATP = L-seryl-tRNA(Sec) + AMP + diphosphate + H(+). It functions in the pathway aminoacyl-tRNA biosynthesis; selenocysteinyl-tRNA(Sec) biosynthesis; L-seryl-tRNA(Sec) from L-serine and tRNA(Sec): step 1/1. In terms of biological role, catalyzes the attachment of serine to tRNA(Ser). Is also able to aminoacylate tRNA(Sec) with serine, to form the misacylated tRNA L-seryl-tRNA(Sec), which will be further converted into selenocysteinyl-tRNA(Sec). The chain is Serine--tRNA ligase from Thermococcus gammatolerans (strain DSM 15229 / JCM 11827 / EJ3).